Consider the following 200-residue polypeptide: NADH-quinone oxidoreductase subunit C (200 aa).

Belongs to the complex I 30 kDa subunit family. In terms of assembly, NDH-1 is composed of 14 different subunits. Subunits NuoB, C, D, E, F, and G constitute the peripheral sector of the complex.

It localises to the cell inner membrane. It catalyses the reaction a quinone + NADH + 5 H(+)(in) = a quinol + NAD(+) + 4 H(+)(out). Its function is as follows. NDH-1 shuttles electrons from NADH, via FMN and iron-sulfur (Fe-S) centers, to quinones in the respiratory chain. The immediate electron acceptor for the enzyme in this species is believed to be ubiquinone. Couples the redox reaction to proton translocation (for every two electrons transferred, four hydrogen ions are translocated across the cytoplasmic membrane), and thus conserves the redox energy in a proton gradient. In Cereibacter sphaeroides (strain ATCC 17029 / ATH 2.4.9) (Rhodobacter sphaeroides), this protein is NADH-quinone oxidoreductase subunit C.